A 200-amino-acid polypeptide reads, in one-letter code: MSKWAGIVLAGGMSSRFGEPKALASWQGSTFIEHILKLMTSALQEVVVISHSHIKERVEQLVQVPVIEDIPHYKGNGPLAGIVSGMEYIEADWYAIMPCDAPNVSHEWFTILLEQTSNNYDAVVPIINGRKQPLLAAYHNRVKEKIYALLQEEKRSMGQLLSQCNVKYIAGEDIQANADWFINVNTKEEYVQAQKDLSNE.

GTP contacts are provided by residues 9-11 (LAG), lysine 21, aspartate 69, and aspartate 100. Aspartate 100 contributes to the Mg(2+) binding site.

This sequence belongs to the MobA family. The cofactor is Mg(2+).

It is found in the cytoplasm. The catalysed reaction is Mo-molybdopterin + GTP + H(+) = Mo-molybdopterin guanine dinucleotide + diphosphate. Its function is as follows. Transfers a GMP moiety from GTP to Mo-molybdopterin (Mo-MPT) cofactor (Moco or molybdenum cofactor) to form Mo-molybdopterin guanine dinucleotide (Mo-MGD) cofactor. This is Probable molybdenum cofactor guanylyltransferase from Bacillus cereus (strain Q1).